Reading from the N-terminus, the 367-residue chain is Putative F-box protein At3g21120 (367 aa).

The region spanning 1-43 is the F-box domain; the sequence is MHLPEDLVLEILSKVPAVSLARFRSTCRRWNALVVDGSFAKKH.

This is Putative F-box protein At3g21120 from Arabidopsis thaliana (Mouse-ear cress).